The sequence spans 459 residues: ATP-dependent RNA helicase me31b (459 aa).

The tract at residues 1–267 is recA-like domain 1; it reads MMTEKLNSGH…EINLMEELTL (267 aa). 2 positions are modified to phosphoserine: Ser8 and Ser29. A Q motif motif is present at residues 58 to 86; it reads NEFEEFCLKRELLMGIFEKGWERPSPIQE. A Helicase ATP-binding domain is found at 89 to 259; it reads IPIALSGKDV…EKHLREPYEI (171 aa). An ATP-binding site is contributed by 102–109; sequence AKNGTGKT. Residues 207 to 210 carry the DEAD box motif; sequence DEAD. Residues 264-431 form a gyf binding region; that stretch reads ELTLKGVTQY…PKVIDPALYV (168 aa). The Helicase C-terminal domain occupies 269–429; it reads GVTQYYAFVQ…PIPKVIDPAL (161 aa). Positions 432–459 are recA-like domain 2; that stretch reads ANVGASVGDTCNNSDLNNSANEEGNVSK. Phosphoserine is present on Ser450.

It belongs to the DEAD box helicase family. DDX6/DHH1 subfamily. As to quaternary structure, conserved component of different types of multiprotein ribonucleoprotein complexes (RNPs) that form distinct germ granules (P-body, nuage, sponge body or polar granules) and P-body-like neuronal RNPs. Consequently it interacts with a wide variety of proteins, some of which appear to be common interactive partners in almost all RNPs types i.e. cup and tral, whereas other interactions are specific to a germ granule/RNP. Core functional components in me31B-containing RNPs include RNA regulatory proteins (such as translational repressor, RNA-decapping and exonuclease proteins), RNA localization proteins and additional proteins depending on the biological context of the RNPs. In the P-body RNPs, interacts with at least the translation repressor proteins tral, cup and Edc3, and the mRNA localization factor yps. Interaction with tral or Edc3 is required for translation repression and possibly RNA decapping; binding to tral and Edc3 is mutually exclusive. In the nuage and germ plasm polar granule RNPs, interacts with at least tral, cup, and additional proteins required for assembly and function of the germ granules such as tud, vas and aub. Interacts (when dimethylated on Arg residues) with tud; interaction is RNA-independent. Component of the osk RNP complex, which is composed of at least me31B, exu, yps, aret/bruno, cup, and the mRNA of osk. Component of the nanos RNP complex, which is composed of at least smg, cup, tral, me31B, the CCR4-NOT complex members Rga/NOT2 and Caf1-55, and the mRNA of nanos (nos). Interacts with tral and piRNA pathway components papi and AGO3; promotes interaction between nuage RNPs and the piRNA-mediated transposon silencing. Forms a RNP containing at least me31B, eIF4E1, cup, tral and pAbp; this interaction is required for the translational silencing of maternal mRNAs during the maternal-to-zygotic transition. In the sponge body, forms a RNP containing at least me31B, exu, yps and the mRNA of osk; interactions with exu and yps are RNA dependent. Component of a neuronal RNP, at least composed of me31B, tral and Fmr1. Component of the Atx2-Not1 repressor complex, composed of at least me31B, Atx2, tyf and pAbp. Interacts (via the C-terminus) with Atx2, tyf, pAbp and Lsm12a. Interacts (via RecA-like domain 2) with 4EHP-GYF2 complex member Gyf (via the me31B binding motif). Interacts with 4E-T, Edc3 and Patr-1. In terms of processing, symmetrically dimethylated on arginine residues. As to expression, ubiquitously expressed throughout the brain (at protein level). Expressed in the olfactory system including the antennal lobes, projection neurons, local interneurons, mushroom-body Kenyon cells and glial cells (at protein level).

It localises to the cytoplasm. It is found in the cytoplasmic ribonucleoprotein granule. The protein resides in the P-body. The protein localises to the endoplasmic reticulum. Its subcellular location is the cell projection. It localises to the dendrite. The catalysed reaction is ATP + H2O = ADP + phosphate + H(+). In terms of biological role, ATP-dependent RNA helicase which is a core component of a variety of ribonucleoprotein complexes (RNPs) that play critical roles in translational repression and mRNA decapping during embryogenesis, oogenesis, neurogenesis and neurotransmission. Recruits core components and translational repressors to some RNP complexes, and mediates RNP aggregation into processing granules such as P-bodies. As part of a RNP complex containing tral, eIF4E1, cup, and pAbp, involved in RNP-mediated translational repression of maternal mRNAs during oogenesis and embryogenesis. As part of a RNP complex containing tral and the RNA localization factors exu and yps, mediates translational silencing of mRNAs such as osk/oskar and bcd/bicoid during their transport to the oocyte in order to prevent their translation until they reach their positional destinations. In neurons and possibly imaginal disks, involved in miRNA-mediated translational repression, possibly in association with components of the piRNA transposon silencing pathway. Involved in RNA localization and protein trafficking in the oocyte. As part of an ER-associated RNP containing tral, cup and yps, required for tral-dependent ER exit site formation and consequently efficient trafficking of proteins such as grk and yl through the secretory pathway. Component of neuron RNPs that mediate transport and translation of neuronal RNAs, including translation repression of synaptic transcripts in preparation for their dendritic targeting. As part of the Atx2-Not1 repressor complex promotes Not1-dependent post-transcriptional gene silencing in adult circadian pacemaker neurons in order to sustain high-amplitude circadian rhythms and Pdf cycling in a per-independent manner. Promotes the interaction between Atx2 and Not1 within the Atx2-Not1 RNP complex. Recruited to the 4EHP-GYF2 complex by Gyf, where it plays a role in 4EHP-GYF2 mediated translational repression and mRNA decay. In Drosophila melanogaster (Fruit fly), this protein is ATP-dependent RNA helicase me31b (me31B).